Reading from the N-terminus, the 196-residue chain is MEDYIIDFLIKFQKLIAKNVKIQHLGIENVKRICGTDIAYKGNIGYAVAVKEEEGKIEYNLVKGDVFFPYIPTFLFVREAPLMIKAVEKYECDLILVDGHGLTHPRKSGIATVIGVLLDKPTIGVAKSRLTGDLVVENNITYVILHGEKLGVKVGKYFFSIGNKTDLSDVIDLAKKGYPKVLKLADKLSKDLKKKE.

Positions 37 and 98 each coordinate Mg(2+).

This sequence belongs to the endonuclease V family. It depends on Mg(2+) as a cofactor.

The protein localises to the cytoplasm. The catalysed reaction is Endonucleolytic cleavage at apurinic or apyrimidinic sites to products with a 5'-phosphate.. Its function is as follows. DNA repair enzyme involved in the repair of deaminated bases. Selectively cleaves double-stranded DNA at the second phosphodiester bond 3' to a deoxyinosine leaving behind the intact lesion on the nicked DNA. The protein is Endonuclease V of Sulfurisphaera tokodaii (strain DSM 16993 / JCM 10545 / NBRC 100140 / 7) (Sulfolobus tokodaii).